The following is a 273-amino-acid chain: Dermonecrotic toxin LafSicTox-betaIE1 (273 aa).

The active site involves His5. Mg(2+) contacts are provided by Glu25 and Asp27. His41 acts as the Nucleophile in catalysis. 2 disulfides stabilise this stretch: Cys45–Cys51 and Cys47–Cys189. Position 85 (Asp85) interacts with Mg(2+). Residue Asn250 is glycosylated (N-linked (GlcNAc...) asparagine).

This sequence belongs to the arthropod phospholipase D family. Class II subfamily. It depends on Mg(2+) as a cofactor. As to expression, expressed by the venom gland.

It is found in the secreted. It carries out the reaction an N-(acyl)-sphingosylphosphocholine = an N-(acyl)-sphingosyl-1,3-cyclic phosphate + choline. It catalyses the reaction an N-(acyl)-sphingosylphosphoethanolamine = an N-(acyl)-sphingosyl-1,3-cyclic phosphate + ethanolamine. The enzyme catalyses a 1-acyl-sn-glycero-3-phosphocholine = a 1-acyl-sn-glycero-2,3-cyclic phosphate + choline. The catalysed reaction is a 1-acyl-sn-glycero-3-phosphoethanolamine = a 1-acyl-sn-glycero-2,3-cyclic phosphate + ethanolamine. Dermonecrotic toxins cleave the phosphodiester linkage between the phosphate and headgroup of certain phospholipids (sphingolipid and lysolipid substrates), forming an alcohol (often choline) and a cyclic phosphate. This toxin acts on sphingomyelin (SM). It may also act on ceramide phosphoethanolamine (CPE), lysophosphatidylcholine (LPC) and lysophosphatidylethanolamine (LPE), but not on lysophosphatidylserine (LPS), and lysophosphatidylglycerol (LPG). It acts by transphosphatidylation, releasing exclusively cyclic phosphate products as second products. Induces dermonecrosis, hemolysis, increased vascular permeability, edema, inflammatory response, and platelet aggregation. The polypeptide is Dermonecrotic toxin LafSicTox-betaIE1 (Loxosceles aff. spinulosa (strain GJB-2008) (Recluse spider)).